The primary structure comprises 136 residues: Histone H3.3C-like (136 aa).

At Arg3 the chain carries Asymmetric dimethylarginine; by PRMT6; alternate. At Arg3 the chain carries Citrulline; alternate. A Phosphothreonine; by HASPIN modification is found at Thr4. Lys5 is modified (allysine; alternate). N6,N6,N6-trimethyllysine; alternate is present on Lys5. Lys5 carries the N6,N6-dimethyllysine; alternate modification. Residue Lys5 is modified to N6-(2-hydroxyisobutyryl)lysine; alternate. Lys5 bears the N6-(beta-hydroxybutyryl)lysine; alternate mark. Lys5 is modified (N6-acetyllysine; alternate). N6-methyllysine; alternate is present on Lys5. Thr7 is modified (phosphothreonine; by PKC). Position 10 is an N6,N6,N6-trimethyllysine; alternate (Lys10). N6,N6-dimethyllysine; alternate is present on Lys10. An N6-(2-hydroxyisobutyryl)lysine; alternate modification is found at Lys10. The residue at position 10 (Lys10) is an N6-acetyllysine; alternate. Lys10 is modified (N6-methyllysine; alternate). Position 11 is an ADP-ribosylserine; alternate (Ser11). Ser11 carries the post-translational modification Phosphoserine; alternate; by AURKB, AURKC, RPS6KA3, RPS6KA4 and RPS6KA5. The residue at position 12 (Thr12) is a Phosphothreonine; by PKC. Lys15 carries the post-translational modification N6-(2-hydroxyisobutyryl)lysine; alternate. Position 15 is an N6-(beta-hydroxybutyryl)lysine; alternate (Lys15). N6-acetyllysine; alternate is present on Lys15. Lys15 is modified (N6-glutaryllysine; alternate). Lys15 is subject to N6-succinyllysine; alternate. Arg18 is modified (citrulline; alternate). Arg18 carries the asymmetric dimethylarginine; by CARM1; alternate modification. An N6-(2-hydroxyisobutyryl)lysine; alternate mark is found at Lys19 and Lys28. Lys19 carries the post-translational modification N6-(beta-hydroxybutyryl)lysine; alternate. N6-acetyllysine; alternate occurs at positions 19 and 28. 2 positions are modified to N6-methyllysine; alternate: Lys19 and Lys28. Residues Lys19 and Lys28 each carry the N6-glutaryllysine; alternate modification. An N6-butyryllysine; alternate modification is found at Lys19. At Lys28 the chain carries N6,N6,N6-trimethyllysine; alternate. The residue at position 28 (Lys28) is an N6,N6-dimethyllysine; alternate. Ser29 is subject to ADP-ribosylserine; alternate. Ser29 carries the post-translational modification Phosphoserine; alternate; by AURKB, AURKC and RPS6KA5. The residue at position 32 (Ser32) is a Phosphoserine. At Lys38 the chain carries N6-methyllysine. Residue Tyr42 is modified to Phosphotyrosine. Position 57 is an N6,N6,N6-trimethyllysine; alternate (Lys57). The residue at position 57 (Lys57) is an N6-(2-hydroxyisobutyryl)lysine; alternate. Lys57 carries the post-translational modification N6-(beta-hydroxybutyryl)lysine; alternate. Lys57 is subject to N6-acetyllysine; alternate. At Lys57 the chain carries N6-glutaryllysine; alternate. An N6-succinyllysine; alternate modification is found at Lys57. Lys57 bears the N6-methyllysine; by EHMT2; alternate mark. Ser58 is modified (phosphoserine). An N6-(2-hydroxyisobutyryl)lysine; alternate mark is found at Lys65 and Lys80. N6-methyllysine; alternate is present on residues Lys65 and Lys80. Lys80 is subject to N6,N6,N6-trimethyllysine; alternate. Residue Lys80 is modified to N6,N6-dimethyllysine; alternate. At Lys80 the chain carries N6-acetyllysine; alternate. Lys80 carries the post-translational modification N6-glutaryllysine; alternate. At Lys80 the chain carries N6-succinyllysine; alternate. Thr81 bears the Phosphothreonine mark. Residue Ser87 is modified to Phosphoserine.

Belongs to the histone H3 family. As to quaternary structure, the nucleosome is a histone octamer containing two molecules each of H2A, H2B, H3 and H4 assembled in one H3-H4 heterotetramer and two H2A-H2B heterodimers. The octamer wraps approximately 147 bp of DNA. In terms of processing, acetylation is generally linked to gene activation. Acetylation on Lys-19 favors methylation at Arg-18. Citrullination at Arg-18 by PADI4 impairs methylation and represses transcription. Post-translationally, asymmetric dimethylation at Arg-18 (H3R17me2a) by CARM1 is linked to gene activation. Asymmetric dimethylation at Arg-3 (H3R2me2a) by PRMT6 is linked to gene repression and is mutually exclusive with H3 Lys-5 methylation (H3K4me2 and H3K4me3). H3R2me2a is present at the 3' of genes regardless of their transcription state and is enriched on inactive promoters, while it is absent on active promoters. In terms of processing, methylation at Lys-5 (H3K4me) and Lys-80 (H3K79me) are linked to gene activation. Methylation at Lys-5 (H3K4me) facilitates subsequent acetylation of H3 and H4. Methylation at Lys-80 (H3K79me) is associated with DNA double-strand break (DSB) responses and is a specific target for TP53BP1. Methylation at Lys-10 (H3K9me) and Lys-28 (H3K27me) are linked to gene repression. Methylation at Lys-10 (H3K9me) is a specific target for HP1 proteins (CBX1, CBX3 and CBX5) and prevents subsequent phosphorylation at Ser-11 (H3S10ph) and acetylation of H3 and H4. Methylation at Lys-5 (H3K4me) and Lys-80 (H3K79me) require preliminary monoubiquitination of H2B at 'Lys-120'. Methylation at Lys-10 (H3K9me) and Lys-28 (H3K27me) are enriched in inactive X chromosome chromatin. Monomethylation at Lys-57 (H3K56me1) by EHMT2/G9A in G1 phase promotes interaction with PCNA and is required for DNA replication. Phosphorylated at Thr-4 (H3T3ph) by HASPIN during prophase and dephosphorylated during anaphase. Phosphorylation at Ser-11 (H3S10ph) by AURKB is crucial for chromosome condensation and cell-cycle progression during mitosis and meiosis. In addition phosphorylation at Ser-11 (H3S10ph) by RPS6KA4 and RPS6KA5 is important during interphase because it enables the transcription of genes following external stimulation, like mitogens, stress, growth factors or UV irradiation and result in the activation of genes, such as c-fos and c-jun. Phosphorylation at Ser-11 (H3S10ph), which is linked to gene activation, prevents methylation at Lys-10 (H3K9me) but facilitates acetylation of H3 and H4. Phosphorylation at Ser-11 (H3S10ph) by AURKB mediates the dissociation of HP1 proteins (CBX1, CBX3 and CBX5) from heterochromatin. Phosphorylation at Ser-11 (H3S10ph) is also an essential regulatory mechanism for neoplastic cell transformation. Phosphorylated at Ser-29 (H3S28ph) by MAP3K20 isoform 1, RPS6KA5 or AURKB during mitosis or upon ultraviolet B irradiation. Phosphorylation at Thr-7 (H3T6ph) by PRKCB is a specific tag for epigenetic transcriptional activation that prevents demethylation of Lys-5 (H3K4me) by LSD1/KDM1A. At centromeres, specifically phosphorylated at Thr-12 (H3T11ph) from prophase to early anaphase, by DAPK3 and PKN1. Phosphorylation at Thr-12 (H3T11ph) by PKN1 or isoform M2 of PKM (PKM2) is a specific tag for epigenetic transcriptional activation that promotes demethylation of Lys-10 (H3K9me) by KDM4C/JMJD2C. Phosphorylation at Tyr-42 (H3Y41ph) by JAK2 promotes exclusion of CBX5 (HP1 alpha) from chromatin. Post-translationally, lysine deamination at Lys-5 (H3K4all) to form allysine is mediated by LOXL2. Allysine formation by LOXL2 only takes place on H3K4me3 and results in gene repression. In terms of processing, butyrylation of histones marks active promoters and competes with histone acetylation. It is present during late spermatogenesis. Succinylation at Lys-80 (H3K79succ) by KAT2A takes place with a maximum frequency around the transcription start sites of genes. It gives a specific tag for epigenetic transcription activation. Post-translationally, serine ADP-ribosylation constitutes the primary form of ADP-ribosylation of proteins in response to DNA damage. Serine ADP-ribosylation at Ser-11 (H3S10ADPr) is mutually exclusive with phosphorylation at Ser-11 (H3S10ph) and impairs acetylation at Lys-10 (H3K9ac).

It localises to the nucleus. It is found in the chromosome. Core component of nucleosome. Nucleosomes wrap and compact DNA into chromatin, limiting DNA accessibility to the cellular machineries which require DNA as a template. Histones thereby play a central role in transcription regulation, DNA repair, DNA replication and chromosomal stability. DNA accessibility is regulated via a complex set of post-translational modifications of histones, also called histone code, and nucleosome remodeling. In Bos taurus (Bovine), this protein is Histone H3.3C-like.